The following is a 299-amino-acid chain: 4-diphosphocytidyl-2-C-methyl-D-erythritol kinase (299 aa).

Lysine 11 is an active-site residue. 94–104 (PQGGGLGGGSS) serves as a coordination point for ATP. Residue aspartate 136 is part of the active site.

The protein belongs to the GHMP kinase family. IspE subfamily.

The enzyme catalyses 4-CDP-2-C-methyl-D-erythritol + ATP = 4-CDP-2-C-methyl-D-erythritol 2-phosphate + ADP + H(+). The protein operates within isoprenoid biosynthesis; isopentenyl diphosphate biosynthesis via DXP pathway; isopentenyl diphosphate from 1-deoxy-D-xylulose 5-phosphate: step 3/6. In terms of biological role, catalyzes the phosphorylation of the position 2 hydroxy group of 4-diphosphocytidyl-2C-methyl-D-erythritol. The chain is 4-diphosphocytidyl-2-C-methyl-D-erythritol kinase from Bordetella bronchiseptica (strain ATCC BAA-588 / NCTC 13252 / RB50) (Alcaligenes bronchisepticus).